The following is an 82-amino-acid chain: Beta-defensin 113 (82 aa).

The first 16 residues, 1 to 16 (MKILCIFLTFVFTVSC), serve as a signal peptide directing secretion. Cystine bridges form between C35-C61, C42-C56, and C46-C62.

Belongs to the beta-defensin family.

The protein localises to the secreted. Functionally, has antibacterial activity. This is Beta-defensin 113 (DEFB113) from Homo sapiens (Human).